A 431-amino-acid polypeptide reads, in one-letter code: Adenylosuccinate synthetase (431 aa).

Residues 13–19 (GDEGKGK) and 41–43 (GHT) each bind GTP. The Proton acceptor role is filled by aspartate 14. Positions 14 and 41 each coordinate Mg(2+). Residues 14 to 17 (DEGK), 39 to 42 (NAGH), threonine 130, arginine 144, glutamine 225, threonine 240, and arginine 304 each bind IMP. The active-site Proton donor is histidine 42. Residue 300 to 306 (ATTGRKR) participates in substrate binding. Residues arginine 306, 332 to 334 (KLD), and 415 to 417 (STG) contribute to the GTP site.

It belongs to the adenylosuccinate synthetase family. Homodimer. Requires Mg(2+) as cofactor.

The protein localises to the cytoplasm. The catalysed reaction is IMP + L-aspartate + GTP = N(6)-(1,2-dicarboxyethyl)-AMP + GDP + phosphate + 2 H(+). It participates in purine metabolism; AMP biosynthesis via de novo pathway; AMP from IMP: step 1/2. In terms of biological role, plays an important role in the de novo pathway of purine nucleotide biosynthesis. Catalyzes the first committed step in the biosynthesis of AMP from IMP. This is Adenylosuccinate synthetase from Shewanella oneidensis (strain ATCC 700550 / JCM 31522 / CIP 106686 / LMG 19005 / NCIMB 14063 / MR-1).